A 235-amino-acid chain; its full sequence is Regulator of G-protein signaling 9-binding protein (235 aa).

Residues 1–210 (MAREECKALL…ERGGGCDPRK (210 aa)) lie on the Cytoplasmic side of the membrane. Coiled coils occupy residues 29–54 (GSADSQNLRQELQKTRQKAQELAVST) and 144–169 (VADLRELEREVLQVGEMIDNMEMKVN). The segment at 153–200 (EVLQVGEMIDNMEMKVNVPRWTVQARQAAGAELLSTVSAGPSSVVSLQ) is SNARE-like. A helical; Anchor for type IV membrane protein transmembrane segment spans residues 211-231 (ALAAILFGAVLLAAVALAVCV). Residues 232–235 (AKLS) are Extracellular-facing.

The protein belongs to the RGS7BP/RGS9BP family. In terms of assembly, specifically interacts with isoform RGS9-1 of RGS9. Component of the RGS9-1-Gbeta5 complex composed of RGS9-1, Gbeta5 (GNB5) and RGS9BP.

It localises to the membrane. Regulator of G protein-coupled receptor (GPCR) signaling in phototransduction. Participates in the recovery phase of visual transduction via its interaction with RGS9-1 isoform. Acts as a membrane-anchor that mediates the targeting of RGS9-1 to the photoreceptor outer segment, where phototransduction takes place. Enhances the ability of RGS9-1 to stimulate G protein GTPase activity, allowing the visual signal to be terminated on the physiologically time scale. It also controls the proteolytic stability of RGS9-1, probably by protecting it from degradation. This is Regulator of G-protein signaling 9-binding protein (RGS9BP) from Homo sapiens (Human).